The primary structure comprises 313 residues: Formate-nitrite transporter (313 aa).

At 1-47 (MPKSNTKYVIDPLSVKTSCSSEESYIRCVEYGKSKAHYSSLILLAKA) the chain is on the cytoplasmic side. The helical transmembrane segment at 48-68 (ILAGVFVGVCAHASGIAGGLF) threads the bilayer. Residues 69–77 (YYHKLREYV) are Extracellular-facing. Residues 78 to 98 (GASMSAFVYGFTFPIAFLCII) form a helical membrane-spanning segment. Residues 99–128 (CTGSDLFTGNTLAVTTALLHGKVSCLEYVR) lie on the Cytoplasmic side of the membrane. Residues 129-149 (VMCISLFGNYVGAVSFAFFVS) traverse the membrane as a helical segment. The Extracellular portion of the chain corresponds to 150–185 (YGSGAFHKKEQVDKNHIFQFLNDIAVKKVNHTFVEC). The N-linked (GlcNAc...) asparagine glycan is linked to Asn-179. The chain crosses the membrane as a helical span at residues 186-206 (ICLAIGCNIFVCLAVYFVLSI). Residues 207–211 (KDGSG) are Cytoplasmic-facing. The chain crosses the membrane as a helical span at residues 212 to 232 (MVFSVFFAVYAFAIAGYEHII). The Extracellular portion of the chain corresponds to 233–260 (ANIYTLNISLMIDTEVSFTQVYFKNLLP). N-linked (GlcNAc...) asparagine glycosylation is present at Asn-239. A helical membrane pass occupies residues 261–281 (TLIGNYIAGALVLACPLFFIY). Residues 282–313 (RSYYINYEKMNEPSGGSLRSISIEMKNDGGAT) lie on the Cytoplasmic side of the membrane.

Belongs to the FNT transporter (TC 1.A.16) family. In terms of assembly, homopentamer.

It localises to the cell membrane. The protein localises to the vacuole membrane. The catalysed reaction is (S)-lactate(in) + H(+)(in) = (S)-lactate(out) + H(+)(out). It catalyses the reaction formate(in) + H(+)(in) = formate(out) + H(+)(out). It carries out the reaction pyruvate(out) + H(+)(out) = pyruvate(in) + H(+)(in). The enzyme catalyses acetate(out) + H(+)(out) = acetate(in) + H(+)(in). Inhibited by the Malaria Box compound MMV007839 and its derivatives BH296 and BH267.meta. Monocarboxylate-proton symporter that mediates the efflux of the waste product lactate in the intraerythrocytic parasites; active in acidic-to-neutral pH range. Transports L-lactate. The polypeptide is Formate-nitrite transporter (Plasmodium ovale).